A 132-amino-acid polypeptide reads, in one-letter code: Transthyretin-like protein 16 (132 aa).

The first 19 residues, 1 to 19, serve as a signal peptide directing secretion; that stretch reads MRSLVVCLLLAACALECTA. N-linked (GlcNAc...) asparagine glycosylation occurs at Asn-23.

It belongs to the nematode transthyretin-like family.

Its subcellular location is the secreted. The polypeptide is Transthyretin-like protein 16 (ttr-16) (Caenorhabditis elegans).